Here is a 1117-residue protein sequence, read N- to C-terminus: Protein ECM21 (1117 aa).

Disordered stretches follow at residues 1–48 (MPFI…RRSS) and 63–155 (VHSP…YSQI). The span at 11–34 (KNSSHSLSETDLNQSKGQPFQPSP) shows a compositional bias: polar residues. The residue at position 18 (Ser-18) is a Phosphoserine. The segment covering 70-81 (NNTTKGGNNNGN) has biased composition (low complexity). At Ser-115 the chain carries Phosphoserine. Positions 117-130 (SDSATTTPRSSTSD) are enriched in low complexity. Ser-140 is modified (phosphoserine). Lys-191 is covalently cross-linked (Glycyl lysine isopeptide (Lys-Gly) (interchain with G-Cter in ubiquitin)). Disordered regions lie at residues 275–312 (ATTA…ELNT) and 486–523 (YRQD…AQAH). Ser-286 is subject to Phosphoserine. Residues 501-519 (SSSSLSSTTSSLKLTETES) show a composition bias toward low complexity. Residues Ser-527 and Ser-550 each carry the phosphoserine modification. Glycyl lysine isopeptide (Lys-Gly) (interchain with G-Cter in ubiquitin) cross-links involve residues Lys-577, Lys-651, and Lys-712. The residue at position 775 (Ser-775) is a Phosphoserine. Residues Lys-794, Lys-807, and Lys-1024 each participate in a glycyl lysine isopeptide (Lys-Gly) (interchain with G-Cter in ubiquitin) cross-link. 2 disordered regions span residues 1016 to 1065 (RSRF…KDKQ) and 1079 to 1117 (KDDE…SDEE). Residues 1027–1059 (STPSPVNRSHNSSPTNGLSQANGTVRIPNATTE) are compositionally biased toward polar residues. Ser-1035 carries the post-translational modification Phosphoserine. The segment covering 1089 to 1098 (SSSSADSLLS) has biased composition (low complexity).

This sequence belongs to the CSR2 family.

The protein resides in the cytoplasm. Functionally, may be involved in cell wall organization and biogenesis. The protein is Protein ECM21 (ECM21) of Saccharomyces cerevisiae (strain ATCC 204508 / S288c) (Baker's yeast).